The following is a 220-amino-acid chain: Cell division protein SepF (220 aa).

A disordered region spans residues 1-120 (MAIKDAFNKM…RREQYQHAAH (120 aa)). The segment covering 26–35 (LSSKKQEEPV) has biased composition (basic and acidic residues). Residues 39 to 79 (QQTSRPNQQQQAARASQPQQPKQARPQMQAQQRPQSQSRAA) are compositionally biased toward low complexity. Residues 93-102 (VSHDYNDRRA) show a composition bias toward basic and acidic residues.

It belongs to the SepF family. In terms of assembly, homodimer. Interacts with FtsZ.

The protein localises to the cytoplasm. In terms of biological role, cell division protein that is part of the divisome complex and is recruited early to the Z-ring. Probably stimulates Z-ring formation, perhaps through the cross-linking of FtsZ protofilaments. Its function overlaps with FtsA. This Streptococcus equi subsp. equi (strain 4047) protein is Cell division protein SepF.